Consider the following 323-residue polypeptide: tRNA dimethylallyltransferase (323 aa).

ATP is bound at residue 18–25 (GPTASGKS). Position 20–25 (20–25 (TASGKS)) interacts with substrate. 3 interaction with substrate tRNA regions span residues 43–46 (DSAQ), 167–171 (QRIQR), and 249–254 (RCVGYR).

Belongs to the IPP transferase family. In terms of assembly, monomer. The cofactor is Mg(2+).

The catalysed reaction is adenosine(37) in tRNA + dimethylallyl diphosphate = N(6)-dimethylallyladenosine(37) in tRNA + diphosphate. Catalyzes the transfer of a dimethylallyl group onto the adenine at position 37 in tRNAs that read codons beginning with uridine, leading to the formation of N6-(dimethylallyl)adenosine (i(6)A). The chain is tRNA dimethylallyltransferase from Nitrosospira multiformis (strain ATCC 25196 / NCIMB 11849 / C 71).